The chain runs to 115 residues: Large ribosomal subunit protein bL19 (115 aa).

The protein belongs to the bacterial ribosomal protein bL19 family.

In terms of biological role, this protein is located at the 30S-50S ribosomal subunit interface and may play a role in the structure and function of the aminoacyl-tRNA binding site. The protein is Large ribosomal subunit protein bL19 of Salmonella choleraesuis (strain SC-B67).